An 86-amino-acid polypeptide reads, in one-letter code: Small ribosomal subunit protein uS15 (86 aa).

Positions 1 to 22 (MSIDTQKVIEDNKRSSADTGSP) are disordered. Positions 7-16 (KVIEDNKRSS) are enriched in basic and acidic residues.

It belongs to the universal ribosomal protein uS15 family. In terms of assembly, part of the 30S ribosomal subunit. Forms a bridge to the 50S subunit in the 70S ribosome, contacting the 23S rRNA.

Its function is as follows. One of the primary rRNA binding proteins, it binds directly to 16S rRNA where it helps nucleate assembly of the platform of the 30S subunit by binding and bridging several RNA helices of the 16S rRNA. Forms an intersubunit bridge (bridge B4) with the 23S rRNA of the 50S subunit in the ribosome. The sequence is that of Small ribosomal subunit protein uS15 from Stenotrophomonas maltophilia (strain R551-3).